We begin with the raw amino-acid sequence, 255 residues long: MIDIQNLEDHRKINIQKVGVKGINYPIVVLDKAKGTQHVNASINMYVDLPHHFKGTHMSRFIEVLNEFRGEINIRTFHTILEKVRDKLKAESAHMEITFPYFIEKTAPVSGAKSLMDYICAFSGMNAENKKDFLVGVVVPVTTVCPCSKEISCMGAHNQRSHVTVKVRFKKFFWLEDIIRLVETSASGEVYSLLKRVDEKYVTEQGYANPMFVEDVVRNVAERLNENSNLTWYSVEAENFESIHNHNAYAYVEKE.

Belongs to the GTP cyclohydrolase IV family.

It carries out the reaction GTP + H2O = 7,8-dihydroneopterin 3'-triphosphate + formate + H(+). Its pathway is cofactor biosynthesis; 7,8-dihydroneopterin triphosphate biosynthesis; 7,8-dihydroneopterin triphosphate from GTP: step 1/1. Functionally, converts GTP to 7,8-dihydroneopterin triphosphate. The polypeptide is GTP cyclohydrolase FolE2 (Syntrophus aciditrophicus (strain SB)).